A 202-amino-acid chain; its full sequence is Small ribosomal subunit protein uS5 (202 aa).

The S5 DRBM domain occupies 50 to 113; sequence LKQELLNVNI…REAKLNLIPV (64 aa).

This sequence belongs to the universal ribosomal protein uS5 family. As to quaternary structure, part of the 30S ribosomal subunit. Contacts protein S4.

Functionally, with S4 and S12 plays an important role in translational accuracy. The chain is Small ribosomal subunit protein uS5 from Pyrobaculum arsenaticum (strain DSM 13514 / JCM 11321 / PZ6).